Consider the following 473-residue polypeptide: Cytochrome P450 716A2 (473 aa).

The chain crosses the membrane as a helical span at residues 1–21; the sequence is MYLTIIFLFISSIIFPLLFFL. Position 420 (C420) interacts with heme.

This sequence belongs to the cytochrome P450 family. Heme serves as cofactor.

The protein localises to the membrane. Its function is as follows. Possesses triterpene oxidizing activity. Catalyzes the C28 hydroxylation of alpha-amyrin, beta-amyrin, and lupeol, producing uvaol, erythrodiol, and betulin, respectively. Catalyzes the C28 carboxylation of alpha- and beta-amyrin. Possesses 22alpha-hydroxylation activity against alpha- and beta-amaryn. In Arabidopsis thaliana (Mouse-ear cress), this protein is Cytochrome P450 716A2.